Here is a 322-residue protein sequence, read N- to C-terminus: Sideroflexin-2 (322 aa).

M1 is subject to N-acetylmethionine. Transmembrane regions (helical) follow at residues 99 to 119 (GMLI…VIFW), 147 to 167 (ALSY…MNMW), 174 to 194 (LVGR…NIPM), 223 to 243 (VGIA…MILL), and 266 to 286 (LQVL…CGLF).

Belongs to the sideroflexin family. In terms of tissue distribution, expressed in brain, heart, kidney, spleen, thymus, liver, stomach and skin.

The protein resides in the mitochondrion inner membrane. Its subcellular location is the mitochondrion outer membrane. The enzyme catalyses L-serine(in) = L-serine(out). Mitochondrial amino-acid transporter that mediates transport of serine into mitochondria. Involved in mitochondrial iron homeostasis by regulating heme biosynthesis. The protein is Sideroflexin-2 of Mus musculus (Mouse).